A 1772-amino-acid chain; its full sequence is Merozoite surface protein 1 (1772 aa).

The first 18 residues, 1 to 18 (MKVIGLLFSFVFFAIKCK), serve as a signal peptide directing secretion. Asparagine 54 carries N-linked (GlcNAc...) asparagine glycosylation. The segment at 290 to 319 (TGGQSSTEPGSGGSSASGTSSSGQASAGTG) is disordered. Low complexity predominate over residues 305 to 319 (ASGTSSSGQASAGTG). 2 N-linked (GlcNAc...) asparagine glycosylation sites follow: asparagine 406 and asparagine 646. The disordered stretch occupies residues 703-796 (KERMEQGPAI…QPSQAASSTT (94 aa)). The span at 724 to 796 (SAESSTDRST…QPSQAASSTT (73 aa)) shows a compositional bias: low complexity. Residue asparagine 829 is glycosylated (N-linked (GlcNAc...) asparagine). Residues 924 to 1070 (AAPTPVTPAA…SRAESEEDMP (147 aa)) form a disordered region. Composition is skewed to low complexity over residues 930–946 (TPAA…PDVQ) and 956–1052 (SQQP…NSQS). Residues asparagine 1018 and asparagine 1090 are each glycosylated (N-linked (GlcNAc...) asparagine). Residues 1362-1383 (GAVPGSGTDTRVAGSSVDDNED) are disordered. N-linked (GlcNAc...) asparagine glycosylation is found at asparagine 1408, asparagine 1446, asparagine 1541, and asparagine 1629. 2 EGF-like domains span residues 1661–1703 (HVCV…VENN) and 1704–1752 (NPTC…FCSS). Cysteine 1663 and cysteine 1675 form a disulfide bridge. An N-linked (GlcNAc...) asparagine glycan is attached at asparagine 1680. 4 cysteine pairs are disulfide-bonded: cysteine 1687/cysteine 1699, cysteine 1707/cysteine 1720, cysteine 1714/cysteine 1734, and cysteine 1736/cysteine 1750. Serine 1751 carries GPI-anchor amidated serine lipidation. Positions 1752–1772 (SSSFMGLSILLIITLIVFNIF) are cleaved as a propeptide — removed in mature form.

As to quaternary structure, forms a complex composed of subunits p83, p30, p38, and p42 which remain non-covalently associated; the complex is formed at the merozoite surface prior to egress from host erythrocytes. In terms of processing, the p230 precursor is cleaved by SUB1 prior to merozoite egress into 4 subunits p83, p30, p38, and p42 which remain non-covalently associated. In a second processing step during erythrocyte invasion, p42 is cleaved by SUB2 into p33 and p19; the latter remains attached to the merozoite surface via its GPI-anchor and stays on the surface during the subsequent ring stage.

Its subcellular location is the cell membrane. The protein resides in the secreted. During the asexual blood stage, involved in merozoite egress from host erythrocytes possibly via its interaction with the host cytoskeleton protein spectrin resulting in the destabilization of the host cytoskeleton and thus leading to erythrocyte cell membrane rupture. Involved in the binding to host erythrocytes and is required for host erythrocyte invasion. The polypeptide is Merozoite surface protein 1 (Plasmodium yoelii yoelii).